Reading from the N-terminus, the 320-residue chain is E3 ubiquitin-protein ligase RZF1 (320 aa).

Ser-2 carries the post-translational modification N-acetylserine. An RING-type; atypical zinc finger spans residues 186–227 (CPVCKDEFELKSEAKQMPCHHIYHSDCIVPWLVQHNSCPVCR). Positions 229–320 (ELPSRGSSSS…MGYSGWPFDY (92 aa)) are disordered. Composition is skewed to low complexity over residues 232-249 (SRGS…STNG) and 295-308 (QQQQ…QQQQ).

As to expression, expressed in seedlings and in flowers.

The enzyme catalyses S-ubiquitinyl-[E2 ubiquitin-conjugating enzyme]-L-cysteine + [acceptor protein]-L-lysine = [E2 ubiquitin-conjugating enzyme]-L-cysteine + N(6)-ubiquitinyl-[acceptor protein]-L-lysine.. In terms of biological role, E3 ubiquitin-protein ligase that promotes osmotic stress and abscisic acid (ABA) responses. Negatively regulates drought-mediated control of early seedling development, probably by influencing proline content, water loss, membrane ion leakage and the expression of dehydration stress-related genes (e.g. RAB18, RD29A, RD29B, AOX1A, ERD15, ERD1, COR15A, P5CS1 and P5CR). Modulates bZIP11 accumulation during rehydration following drought. The polypeptide is E3 ubiquitin-protein ligase RZF1 (Arabidopsis thaliana (Mouse-ear cress)).